We begin with the raw amino-acid sequence, 404 residues long: MRASPHVLGIVLAGGEGKRLYPLTADRAKPAVPFGGAYRLIDFVLSNLVNARFLRICVLTQYKSHSLDRHISQNWRLSGLAGEYITPVPAQQRLGPRWYTGSADAIHQSLNLIFDEDPEYIVVFGADHVYRMDPEQMLDFHIESGAAVTVAGIRVPRTEASAFGCIDADDTGRIREFVEKPANPPGTPDDPDAAFVSMGNYIFTTKELIDVIRADADDDHSDHDMGGDIIPRLVADGRAAVYDFNTNLVPGATERDHAYWRDVGTLDAFYDAHMDLVSVHPVFNLYNRRWPIRGESENLAPAKFVNGGSAQESVVGAGSIVSAASVRNSVLSSNVVIDDGAVVEGSVLMPGVRVGRGAVVRHAILDKNVVVGVGEQVGVDIERDRERFNVSAGGVVAVGKGVWI.

Alpha-D-glucose 1-phosphate is bound by residues tyrosine 99, glycine 164, 179-180 (EK), and serine 197.

Belongs to the bacterial/plant glucose-1-phosphate adenylyltransferase family.

The enzyme catalyses alpha-D-glucose 1-phosphate + ATP + H(+) = ADP-alpha-D-glucose + diphosphate. Its pathway is capsule biogenesis; capsule polysaccharide biosynthesis. It participates in glycan biosynthesis; glycogen biosynthesis. In terms of biological role, involved in the biosynthesis of ADP-glucose, a building block, required in the biosynthesis of maltose-1-phosphate (M1P) and in the elongation reactions to produce linear alpha-1,4-glucans. Catalyzes the reaction between ATP and alpha-D-glucose 1-phosphate (G1P) to produce pyrophosphate and ADP-Glc. The sequence is that of Glucose-1-phosphate adenylyltransferase from Mycobacteroides abscessus (strain ATCC 19977 / DSM 44196 / CCUG 20993 / CIP 104536 / JCM 13569 / NCTC 13031 / TMC 1543 / L948) (Mycobacterium abscessus).